The primary structure comprises 192 residues: Protein hunchback (192 aa).

Disordered stretches follow at residues 16 to 59, 88 to 108, and 151 to 192; these read SHHH…SNTN, AAMT…WPGL, and ALTP…KYMA. The segment covering 17–31 has biased composition (basic residues); that stretch reads HHHHHHHAHHSRRQH. Residues 92-103 are compositionally biased toward polar residues; it reads PSPSNNDQNSPL. Positions 173–192 are enriched in basic and acidic residues; the sequence is EPEKEHDLMSNSSEDMKYMA.

It belongs to the hunchback C2H2-type zinc-finger protein family.

It is found in the nucleus. Gap class segmentation protein that controls development of head structures. This chain is Protein hunchback (hb), found in Drosophila adiastola (Fruit fly).